We begin with the raw amino-acid sequence, 228 residues long: 6-carboxyhexanoate--CoA ligase (228 aa).

The protein belongs to the BioW family. As to quaternary structure, homodimer. Mg(2+) serves as cofactor.

It carries out the reaction heptanedioate + ATP + CoA = 6-carboxyhexanoyl-CoA + AMP + diphosphate. The protein operates within metabolic intermediate metabolism; pimeloyl-CoA biosynthesis; pimeloyl-CoA from pimelate: step 1/1. In terms of biological role, catalyzes the transformation of pimelate into pimeloyl-CoA with concomitant hydrolysis of ATP to AMP. This chain is 6-carboxyhexanoate--CoA ligase, found in Staphylococcus epidermidis (strain ATCC 12228 / FDA PCI 1200).